The chain runs to 198 residues: Elongation factor Ts (198 aa).

The segment at 82-85 (TDFV) is involved in Mg(2+) ion dislocation from EF-Tu.

This sequence belongs to the EF-Ts family.

The protein localises to the cytoplasm. In terms of biological role, associates with the EF-Tu.GDP complex and induces the exchange of GDP to GTP. It remains bound to the aminoacyl-tRNA.EF-Tu.GTP complex up to the GTP hydrolysis stage on the ribosome. This Oleidesulfovibrio alaskensis (strain ATCC BAA-1058 / DSM 17464 / G20) (Desulfovibrio alaskensis) protein is Elongation factor Ts.